Here is a 127-residue protein sequence, read N- to C-terminus: Calcium-binding protein PBP1 (127 aa).

The span at 1 to 18 (MASPKSSTRPNQENQEPQ) shows a compositional bias: polar residues. Positions 1 to 20 (MASPKSSTRPNQENQEPQFQ) are disordered. The EF-hand domain maps to 72 to 107 (LTDDDVRYMINEGDFDRDGALNQMEFCVLMFRLSPE). The Ca(2+) site is built by Asp85, Asp87, Asp89, and Glu96.

In terms of assembly, interacts with PID.

Its function is as follows. Potential calcium sensor that binds calcium in vitro. This is Calcium-binding protein PBP1 (PBP1) from Arabidopsis thaliana (Mouse-ear cress).